A 192-amino-acid polypeptide reads, in one-letter code: Phosphoheptose isomerase (192 aa).

An SIS domain is found at 37–192 (LADSFKAGGK…IQLIEKEMVK (156 aa)). Substrate is bound at residue 52-54 (NGG). Residues histidine 61 and glutamate 65 each contribute to the Zn(2+) site. Residues glutamate 65, 93-94 (ND), 119-121 (STS), serine 124, and glutamine 172 contribute to the substrate site. Glutamine 172 and histidine 180 together coordinate Zn(2+).

The protein belongs to the SIS family. GmhA subfamily. In terms of assembly, homotetramer. It depends on Zn(2+) as a cofactor.

It localises to the cytoplasm. The catalysed reaction is 2 D-sedoheptulose 7-phosphate = D-glycero-alpha-D-manno-heptose 7-phosphate + D-glycero-beta-D-manno-heptose 7-phosphate. The protein operates within carbohydrate biosynthesis; D-glycero-D-manno-heptose 7-phosphate biosynthesis; D-glycero-alpha-D-manno-heptose 7-phosphate and D-glycero-beta-D-manno-heptose 7-phosphate from sedoheptulose 7-phosphate: step 1/1. Its function is as follows. Catalyzes the isomerization of sedoheptulose 7-phosphate in D-glycero-D-manno-heptose 7-phosphate. This Enterobacter sp. (strain 638) protein is Phosphoheptose isomerase.